The chain runs to 371 residues: Putative glutamate--cysteine ligase 2 (371 aa).

It belongs to the glutamate--cysteine ligase type 2 family. YbdK subfamily.

It catalyses the reaction L-cysteine + L-glutamate + ATP = gamma-L-glutamyl-L-cysteine + ADP + phosphate + H(+). Its function is as follows. ATP-dependent carboxylate-amine ligase which exhibits weak glutamate--cysteine ligase activity. This chain is Putative glutamate--cysteine ligase 2, found in Cupriavidus pinatubonensis (strain JMP 134 / LMG 1197) (Cupriavidus necator (strain JMP 134)).